Consider the following 304-residue polypeptide: Dermonecrotic toxin LiSicTox-betaIA1ii (304 aa).

Residues 1–21 (MLLCAVISFIVYAVFLQEANG) form the signal peptide. The propeptide occupies 22 to 26 (HAAER). Histidine 38 is a catalytic residue. Mg(2+) is bound by residues glutamate 58 and aspartate 60. Residue histidine 74 is the Nucleophile of the active site. 2 cysteine pairs are disulfide-bonded: cysteine 78–cysteine 84 and cysteine 80–cysteine 223. Residue aspartate 118 coordinates Mg(2+).

The protein belongs to the arthropod phospholipase D family. Class II subfamily. Requires Mg(2+) as cofactor. As to expression, expressed by the venom gland.

The protein localises to the secreted. The catalysed reaction is an N-(acyl)-sphingosylphosphocholine = an N-(acyl)-sphingosyl-1,3-cyclic phosphate + choline. It carries out the reaction an N-(acyl)-sphingosylphosphoethanolamine = an N-(acyl)-sphingosyl-1,3-cyclic phosphate + ethanolamine. It catalyses the reaction a 1-acyl-sn-glycero-3-phosphocholine = a 1-acyl-sn-glycero-2,3-cyclic phosphate + choline. The enzyme catalyses a 1-acyl-sn-glycero-3-phosphoethanolamine = a 1-acyl-sn-glycero-2,3-cyclic phosphate + ethanolamine. In terms of biological role, dermonecrotic toxins cleave the phosphodiester linkage between the phosphate and headgroup of certain phospholipids (sphingolipid and lysolipid substrates), forming an alcohol (often choline) and a cyclic phosphate. This toxin acts on sphingomyelin (SM) with low activity. It may also act on ceramide phosphoethanolamine (CPE), lysophosphatidylcholine (LPC) and lysophosphatidylethanolamine (LPE), but not on lysophosphatidylserine (LPS), and lysophosphatidylglycerol (LPG). It acts by transphosphatidylation, releasing exclusively cyclic phosphate products as second products. Induces dermonecrosis, hemolysis, increased vascular permeability, edema, inflammatory response, and platelet aggregation. The polypeptide is Dermonecrotic toxin LiSicTox-betaIA1ii (Loxosceles intermedia (Brown spider)).